A 399-amino-acid chain; its full sequence is Imidazolonepropionase (399 aa).

H68 and H70 together coordinate Fe(3+). Zn(2+) contacts are provided by H68 and H70. The 4-imidazolone-5-propanoate site is built by R77, Y140, and H173. An N-formimidoyl-L-glutamate-binding site is contributed by Y140. H238 lines the Fe(3+) pocket. Residue H238 coordinates Zn(2+). A 4-imidazolone-5-propanoate-binding site is contributed by Q241. Fe(3+) is bound at residue D313. D313 is a binding site for Zn(2+). 2 residues coordinate N-formimidoyl-L-glutamate: N315 and G317. T318 is a 4-imidazolone-5-propanoate binding site.

It belongs to the metallo-dependent hydrolases superfamily. HutI family. Zn(2+) serves as cofactor. It depends on Fe(3+) as a cofactor.

It localises to the cytoplasm. The catalysed reaction is 4-imidazolone-5-propanoate + H2O = N-formimidoyl-L-glutamate. The protein operates within amino-acid degradation; L-histidine degradation into L-glutamate; N-formimidoyl-L-glutamate from L-histidine: step 3/3. Functionally, catalyzes the hydrolytic cleavage of the carbon-nitrogen bond in imidazolone-5-propanoate to yield N-formimidoyl-L-glutamate. It is the third step in the universal histidine degradation pathway. The protein is Imidazolonepropionase of Rhizorhabdus wittichii (strain DSM 6014 / CCUG 31198 / JCM 15750 / NBRC 105917 / EY 4224 / RW1) (Sphingomonas wittichii).